A 277-amino-acid polypeptide reads, in one-letter code: Large ribosomal subunit protein uL2 (277 aa).

The interval 219 to 277 is disordered; the sequence is TVRGSVMNPNDHPHGGGEGKAPVGRKAPSTPWGKPALGLKTRNKKAKSDKLIVRRRNEK. A compositionally biased stretch (basic and acidic residues) spans 264 to 277; that stretch reads AKSDKLIVRRRNEK.

This sequence belongs to the universal ribosomal protein uL2 family. Part of the 50S ribosomal subunit. Forms a bridge to the 30S subunit in the 70S ribosome.

Functionally, one of the primary rRNA binding proteins. Required for association of the 30S and 50S subunits to form the 70S ribosome, for tRNA binding and peptide bond formation. It has been suggested to have peptidyltransferase activity; this is somewhat controversial. Makes several contacts with the 16S rRNA in the 70S ribosome. This chain is Large ribosomal subunit protein uL2, found in Streptococcus pyogenes serotype M1.